A 309-amino-acid polypeptide reads, in one-letter code: MFHILSIVNIIWLLLALCFGAAFCLNKFSVKLPNRVEHVFQDFIRYGKTKENIKRASWQLVFDLSKRYFYHFYVVSVMWNGLLLLFSIRSVVMSEAFPDWIIDVLGSLTGRSRGAWNEIHLSTLLLQVLLWVHTLRRLLECLFVSVFSDGVINVVQYAFGLSYYIILGLTVLCTNDSLPQSESVSFFNQLTWYHVVGTLLFFWASFLQHQSLSLLAKMRTDSSGKVETLAHKMPCGGWFELVSCPHYLAELLIYAAMCVCCGCASLTWWMVVLYVLCNQALAAQLCHEYYRSKFKTYPHHRKAFIPFVL.

The Cytoplasmic portion of the chain corresponds to 1–3; the sequence is MFH. A helical membrane pass occupies residues 4–24; that stretch reads ILSIVNIIWLLLALCFGAAFC. The Lumenal segment spans residues 25–67; it reads LNKFSVKLPNRVEHVFQDFIRYGKTKENIKRASWQLVFDLSKR. Residues 68–88 form a helical membrane-spanning segment; sequence YFYHFYVVSVMWNGLLLLFSI. Topologically, residues 89 to 114 are cytoplasmic; it reads RSVVMSEAFPDWIIDVLGSLTGRSRG. A helical membrane pass occupies residues 115-135; the sequence is AWNEIHLSTLLLQVLLWVHTL. The Lumenal segment spans residues 136–150; that stretch reads RRLLECLFVSVFSDG. The helical transmembrane segment at 151-171 threads the bilayer; that stretch reads VINVVQYAFGLSYYIILGLTV. The Cytoplasmic portion of the chain corresponds to 172–185; the sequence is LCTNDSLPQSESVS. Residues 186-206 traverse the membrane as a helical segment; that stretch reads FFNQLTWYHVVGTLLFFWASF. Topologically, residues 207-255 are lumenal; it reads LQHQSLSLLAKMRTDSSGKVETLAHKMPCGGWFELVSCPHYLAELLIYA. A helical membrane pass occupies residues 256–276; the sequence is AMCVCCGCASLTWWMVVLYVL. At 277–309 the chain is on the cytoplasmic side; that stretch reads CNQALAAQLCHEYYRSKFKTYPHHRKAFIPFVL.

It belongs to the steroid 5-alpha reductase family. Polyprenal reductase subfamily.

The protein resides in the endoplasmic reticulum membrane. It carries out the reaction a di-trans,poly-cis-dolichal + NADP(+) = a di-trans,poly-cis-polyprenal + NADPH + H(+). The enzyme catalyses a 3-oxo-5alpha-steroid + NADP(+) = a 3-oxo-Delta(4)-steroid + NADPH + H(+). It catalyses the reaction androst-4-ene-3,17-dione + NADPH + H(+) = 5alpha-androstan-3,17-dione + NADP(+). The catalysed reaction is 17beta-hydroxy-5alpha-androstan-3-one + NADP(+) = testosterone + NADPH + H(+). Its pathway is protein modification; protein glycosylation. Functionally, plays a key role in early steps of protein N-linked glycosylation by being involved in the conversion of polyprenol into dolichol. Acts as a polyprenal reductase that mediates the reduction of polyprenal into dolichal in a NADP-dependent mechanism. Dolichols are required for the synthesis of dolichol-linked monosaccharides and the oligosaccharide precursor used for N-glycosylation. Also able to convert testosterone (T) into 5-alpha-dihydrotestosterone (DHT). In Danio rerio (Zebrafish), this protein is Polyprenal reductase (srd5a3).